Here is a 208-residue protein sequence, read N- to C-terminus: Holliday junction resolvase RecU (208 aa).

Residues T87, D89, E102, and Q121 each contribute to the Mg(2+) site.

This sequence belongs to the RecU family. Requires Mg(2+) as cofactor.

It localises to the cytoplasm. It carries out the reaction Endonucleolytic cleavage at a junction such as a reciprocal single-stranded crossover between two homologous DNA duplexes (Holliday junction).. In terms of biological role, endonuclease that resolves Holliday junction intermediates in genetic recombination. Cleaves mobile four-strand junctions by introducing symmetrical nicks in paired strands. Promotes annealing of linear ssDNA with homologous dsDNA. Required for DNA repair, homologous recombination and chromosome segregation. This chain is Holliday junction resolvase RecU, found in Staphylococcus aureus (strain Mu3 / ATCC 700698).